A 552-amino-acid chain; its full sequence is MTKYVFVTGGVVSSLGKGIAAASLAAILESRGLKVTLLKLDPYINVDPGTMSPFQHGEVFVTEDGAETDLDLGHYERFISTKMRKANNFTTGQIYESVIRKERRGDYLGKTVQVIPHITNEIQAFIERGAASATCGEPDVAIVEIGGTVGDIESLPFLEAARQMSLRLGRNSACFVHLTLVPYVATAGELKTKPTQHSVQKLREIGILPHVLLCRADRRIPDDESKKISMFSNVPEDAVISVWDADSIYKIPQMLHDQGLDRIICEELKLSPKDADLSMWSALVEKLENPKQEVTIGMVGKYVDLTESYKSLIEALRHASIHTSTKVNIEYIDSEELETNGVDSLKHLDAVLVPGGFGRRGTEGKIAAVRYARESKVPYLGICLGMQLAVIEFARDVVGLKQANSTEFDPDTPERVVALITEWYDREGKVETRTEESDLGGTMRLGSQRCPIKPGTMAEEIYGKDVNERHRHRYEVNNRFVPQLEAGGLIISARTPSEDLPEMMELPRSMHPWFVGVQFHPEFTSTPRDGHPLFRSFVEAALANKQARGVQA.

Residues 1-270 are amidoligase domain; sequence MTKYVFVTGG…DRIICEELKL (270 aa). S13 provides a ligand contact to CTP. S13 is a UTP binding site. ATP contacts are provided by residues 14 to 19 and D71; that span reads SLGKGI. The Mg(2+) site is built by D71 and E144. CTP-binding positions include 151-153, 191-196, and K227; these read DIE and KTKPTQ. UTP is bound by residues 191 to 196 and K227; that span reads KTKPTQ. A Glutamine amidotransferase type-1 domain is found at 295-547; that stretch reads TIGMVGKYVD…VEAALANKQA (253 aa). G356 provides a ligand contact to L-glutamine. C383 (nucleophile; for glutamine hydrolysis) is an active-site residue. L-glutamine is bound by residues 384–387, E407, and R473; that span reads LGMQ. Residues H520 and E522 contribute to the active site.

The protein belongs to the CTP synthase family. As to quaternary structure, homotetramer.

The catalysed reaction is UTP + L-glutamine + ATP + H2O = CTP + L-glutamate + ADP + phosphate + 2 H(+). It catalyses the reaction L-glutamine + H2O = L-glutamate + NH4(+). It carries out the reaction UTP + NH4(+) + ATP = CTP + ADP + phosphate + 2 H(+). It functions in the pathway pyrimidine metabolism; CTP biosynthesis via de novo pathway; CTP from UDP: step 2/2. Allosterically activated by GTP, when glutamine is the substrate; GTP has no effect on the reaction when ammonia is the substrate. The allosteric effector GTP functions by stabilizing the protein conformation that binds the tetrahedral intermediate(s) formed during glutamine hydrolysis. Inhibited by the product CTP, via allosteric rather than competitive inhibition. Catalyzes the ATP-dependent amination of UTP to CTP with either L-glutamine or ammonia as the source of nitrogen. Regulates intracellular CTP levels through interactions with the four ribonucleotide triphosphates. The polypeptide is CTP synthase (Burkholderia cenocepacia (strain HI2424)).